The primary structure comprises 178 residues: Adenine phosphoribosyltransferase (178 aa).

Belongs to the purine/pyrimidine phosphoribosyltransferase family. Homodimer.

It localises to the cytoplasm. It catalyses the reaction AMP + diphosphate = 5-phospho-alpha-D-ribose 1-diphosphate + adenine. It functions in the pathway purine metabolism; AMP biosynthesis via salvage pathway; AMP from adenine: step 1/1. Functionally, catalyzes a salvage reaction resulting in the formation of AMP, that is energically less costly than de novo synthesis. This Mycoplasmoides gallisepticum (strain R(low / passage 15 / clone 2)) (Mycoplasma gallisepticum) protein is Adenine phosphoribosyltransferase.